A 273-amino-acid polypeptide reads, in one-letter code: HTH-type transcriptional activator RhaS (273 aa).

The HTH araC/xylS-type domain maps to 174-272; that stretch reads YQLLDWLQNN…SQSPRDLRSQ (99 aa). 2 DNA-binding regions (H-T-H motif) span residues 191–212 and 239–262; these read PELADRFALPLRTLHRQLKNKT and VTDIAYLCGFGDSNHFSTLFKREF.

Binds DNA as a dimer.

It is found in the cytoplasm. Its function is as follows. Activates expression of the rhaBAD and rhaT operons. The polypeptide is HTH-type transcriptional activator RhaS (Yersinia pestis bv. Antiqua (strain Angola)).